A 225-amino-acid polypeptide reads, in one-letter code: Phosphoserine phosphatase (225 aa).

Residue Met1 is modified to N-acetylmethionine. Asp20 functions as the Nucleophile in the catalytic mechanism. Mg(2+)-binding residues include Asp20 and Asp22. Residue 20–22 participates in L-serine binding; sequence DVD. Asp22 functions as the Proton donor in the catalytic mechanism. Met52 is a binding site for O-phospho-L-serine. Gly53 lines the phosphate pocket. L-serine is bound by residues 109–111 and Lys158; that span reads SGG. O-phospho-L-serine-binding positions include 109 to 111 and Lys158; that span reads SGG. Asp179 serves as a coordination point for Mg(2+). Thr182 serves as a coordination point for O-phospho-L-serine. Residue Thr182 participates in phosphate binding.

It belongs to the HAD-like hydrolase superfamily. SerB family. In terms of assembly, homodimer. Requires Mg(2+) as cofactor.

Its subcellular location is the cytoplasm. The protein resides in the cytosol. It carries out the reaction O-phospho-L-serine + H2O = L-serine + phosphate. The catalysed reaction is O-phospho-D-serine + H2O = D-serine + phosphate. Its pathway is amino-acid biosynthesis; L-serine biosynthesis; L-serine from 3-phospho-D-glycerate: step 3/3. Inhibited by calcium ions. Its function is as follows. Catalyzes the last irreversible step in the biosynthesis of L-serine from carbohydrates, the dephosphorylation of O-phospho-L-serine to L-serine. L-serine can then be used in protein synthesis, to produce other amino acids, in nucleotide metabolism or in glutathione synthesis, or can be racemized to D-serine, a neuromodulator. May also act on O-phospho-D-serine. The sequence is that of Phosphoserine phosphatase from Homo sapiens (Human).